The chain runs to 116 residues: MAGRSGDSDEDLLRTVRLIKVLYQSNPPPSSEGTRQARRNRRRRWRERQRQIRSISGWLLSNYLGRPTEPVPFQLPPLERLTLDCNEDCGTSGTQGVGSPQILVESPPVLDSGTKE.

Ser-5 and Ser-8 each carry phosphoserine; by host CK2. The tract at residues 18–26 is homomultimerization; sequence LIKVLYQSN. Residues 23–48 are disordered; that stretch reads YQSNPPPSSEGTRQARRNRRRRWRER. The Nuclear localization signal and RNA-binding (RRE) motif lies at 34–50; the sequence is TRQARRNRRRRWRERQR. Positions 36 to 47 are enriched in basic residues; that stretch reads QARRNRRRRWRE. A Nuclear export signal and binding to XPO1 motif is present at residues 73-84; that stretch reads FQLPPLERLTLD. Residues 90–116 are disordered; sequence GTSGTQGVGSPQILVESPPVLDSGTKE. 2 positions are modified to phosphoserine; by host: Ser-92 and Ser-99.

It belongs to the HIV-1 REV protein family. As to quaternary structure, homomultimer; when bound to the RRE. Multimeric assembly is essential for activity and may involve XPO1. Binds to human KPNB1, XPO1, TNPO1, RANBP5 and IPO7. Interacts with the viral Integrase. Interacts with human KHDRBS1. Interacts with human NAP1; this interaction decreases Rev multimerization and stimulates its activity. Interacts with human DEAD-box helicases DDX3 and DDX24; these interactions may serve for viral RNA export to the cytoplasm and packaging, respectively. Interacts with human PSIP1; this interaction may inhibit HIV-1 DNA integration by promoting dissociation of the Integrase-LEDGF/p75 complex. Asymmetrically arginine dimethylated at one site by host PRMT6. Methylation impairs the RNA-binding activity and export of viral RNA from the nucleus to the cytoplasm. In terms of processing, phosphorylated by protein kinase CK2. Presence of, and maybe binding to the N-terminus of the regulatory beta subunit of CK2 is necessary for CK2-mediated Rev's phosphorylation.

It is found in the host nucleus. The protein localises to the host nucleolus. It localises to the host cytoplasm. Functionally, escorts unspliced or incompletely spliced viral pre-mRNAs (late transcripts) out of the nucleus of infected cells. These pre-mRNAs carry a recognition sequence called Rev responsive element (RRE) located in the env gene, that is not present in fully spliced viral mRNAs (early transcripts). This function is essential since most viral proteins are translated from unspliced or partially spliced pre-mRNAs which cannot exit the nucleus by the pathway used by fully processed cellular mRNAs. Rev itself is translated from a fully spliced mRNA that readily exits the nucleus. Rev's nuclear localization signal (NLS) binds directly to KPNB1/Importin beta-1 without previous binding to KPNA1/Importin alpha-1. KPNB1 binds to the GDP bound form of RAN (Ran-GDP) and targets Rev to the nucleus. In the nucleus, the conversion from Ran-GDP to Ran-GTP dissociates Rev from KPNB1 and allows Rev's binding to the RRE in viral pre-mRNAs. Rev multimerization on the RRE via cooperative assembly exposes its nuclear export signal (NES) to the surface. Rev can then form a complex with XPO1/CRM1 and Ran-GTP, leading to nuclear export of the complex. Conversion from Ran-GTP to Ran-GDP mediates dissociation of the Rev/RRE/XPO1/RAN complex, so that Rev can return to the nucleus for a subsequent round of export. Beside KPNB1, also seems to interact with TNPO1/Transportin-1, RANBP5/IPO5 and IPO7/RANBP7 for nuclear import. The nucleoporin-like HRB/RIP is an essential cofactor that probably indirectly interacts with Rev to release HIV RNAs from the perinuclear region to the cytoplasm. The protein is Protein Rev of Human immunodeficiency virus type 1 group M subtype B (isolate YU-2) (HIV-1).